The primary structure comprises 731 residues: Gelsolin (731 aa).

The tract at residues V2–F125 is actin-severing. One copy of the Gelsolin-like 1 repeat lies at F25–L107. Residue Y35 is modified to Phosphotyrosine. Ca(2+)-binding residues include G41, D42, E73, D85, G90, and A92. The actin-actin interfilament contact point stretch occupies residues D72–G75. A 1,2-diacyl-sn-glycero-3-phospho-(1D-myo-inositol-4,5-bisphosphate) is bound at residue K111–K118. V121 contributes to the Ca(2+) binding site. A 1,2-diacyl-sn-glycero-3-phospho-(1D-myo-inositol-4,5-bisphosphate) is bound at residue R137–R145. Residues V147–M219 form a Gelsolin-like 2 repeat. Ca(2+) is bound by residues G162 and D163. An intrachain disulfide couples C164 to C177. Positions 185, 235, 278, 279, and 303 each coordinate Ca(2+). The Gelsolin-like 3 repeat unit spans residues D266–F338. Phosphotyrosine occurs at positions 358 and 414. The segment at A383–A731 is actin-binding, Ca-sensitive. Residues S404–M485 form a Gelsolin-like 4 repeat. Positions 420, 421, 451, 463, 468, 470, and 500 each coordinate Ca(2+). K533 carries the post-translational modification N6-acetyllysine. Residues K533 to W591 form a Gelsolin-like 5 repeat. Ca(2+) contacts are provided by N540 and D541. Y552 bears the Phosphotyrosine mark. Residue E563 coordinates Ca(2+). Y600 is subject to Phosphotyrosine. The Gelsolin-like 6 repeat unit spans residues I630–F705. Residues D645, D646, and E668 each coordinate Ca(2+). T691 carries the phosphothreonine modification.

This sequence belongs to the villin/gelsolin family. In terms of assembly, binds to actin and to fibronectin. Identified in a complex composed of ACTA1, COBL, GSN and TMSB4X. Interacts with the inactive form of EIF2AK2/PKR. Interacts with FLII.

The protein localises to the cytoplasm. It localises to the cytoskeleton. Functionally, calcium-regulated, actin-modulating protein that binds to the plus (or barbed) ends of actin monomers or filaments, preventing monomer exchange (end-blocking or capping). It can promote the assembly of monomers into filaments (nucleation) as well as sever filaments already formed. Plays a role in ciliogenesis. This Equus caballus (Horse) protein is Gelsolin (GSN).